A 289-amino-acid chain; its full sequence is Borealin (289 aa).

The required for interaction with INCENP stretch occupies residues M1 to I58. Residues M1–K88 are required for centromere localization. The required for interaction with SENP3 stretch occupies residues M1–A150. The tract at residues G10–K109 is required to form a minimal CPC core complex that localizes to the central spindle and midbody and properly executes the role of the CPC during cytokinesis. The required for interaction with INCENP and BIRC5 stretch occupies residues K20–G78. Citrulline is present on R91. T94 bears the Phosphothreonine; by TTK mark. Residue T106 is modified to Phosphothreonine. S110 is modified (phosphoserine). Residues S122 to R173 are disordered. Residues I123–G133 show a composition bias toward acidic residues. The segment covering R139 to T162 has biased composition (basic residues). K145 is covalently cross-linked (Glycyl lysine isopeptide (Lys-Gly) (interchain with G-Cter in SUMO2)). Position 175 is a phosphoserine (S175). T198 and T213 each carry phosphothreonine. 4 positions are modified to phosphoserine: S228, S233, S247, and S253.

This sequence belongs to the borealin family. As to quaternary structure, may form homooligomers and homodimers. Component of the chromosomal passenger complex (CPC) composed of at least BIRC5/survivin, CDCA8/borealin, INCENP, AURKB or AURKC; in the complex forms a triple-helix bundle-based subcomplex with INCENP and BIRC5. Interacts with SENP3, UBE2I and RANBP2. Interacts (phosphorylated) with SGO1 and SGO2A; the association is dependent on CDK1. Phosphorylated by TTK, essentially at Thr-94. Phosphorylation (probably by CDK1) promotes targeting of the CPC to centromeric DNA. In terms of processing, sumoylated by UBE2I and RANBP2. Desumoylated by SENP3 through the removal of SUMO2 and SUMO3. Post-translationally, citrullinated by PADI4.

It localises to the nucleus. The protein localises to the nucleolus. The protein resides in the cytoplasm. Its subcellular location is the chromosome. It is found in the centromere. It localises to the cytoskeleton. The protein localises to the spindle. Functionally, component of the chromosomal passenger complex (CPC), a complex that acts as a key regulator of mitosis. The CPC complex has essential functions at the centromere in ensuring correct chromosome alignment and segregation and is required for chromatin-induced microtubule stabilization and spindle assembly. In the complex, it may be required to direct the CPC to centromeric DNA. Major effector of the TTK kinase in the control of attachment-error-correction and chromosome alignment. The sequence is that of Borealin (Cdca8) from Mus musculus (Mouse).